A 119-amino-acid chain; its full sequence is Small ribosomal subunit protein uS13 (119 aa).

Residues Ile90–Ser119 are disordered. Residues Arg91–Ser119 show a composition bias toward basic residues.

The protein belongs to the universal ribosomal protein uS13 family. Part of the 30S ribosomal subunit. Forms a loose heterodimer with protein S19. Forms two bridges to the 50S subunit in the 70S ribosome.

Functionally, located at the top of the head of the 30S subunit, it contacts several helices of the 16S rRNA. In the 70S ribosome it contacts the 23S rRNA (bridge B1a) and protein L5 of the 50S subunit (bridge B1b), connecting the 2 subunits; these bridges are implicated in subunit movement. Contacts the tRNAs in the A and P-sites. The polypeptide is Small ribosomal subunit protein uS13 (Coxiella burnetii (strain CbuK_Q154) (Coxiella burnetii (strain Q154))).